The sequence spans 299 residues: tRNA uridine(34) hydroxylase (299 aa).

In terms of domain architecture, Rhodanese spans 132-226; it reads ASRPVVMLDT…YFEEVGGAHY (95 aa). Residue Cys186 is the Cysteine persulfide intermediate of the active site.

The protein belongs to the TrhO family.

The enzyme catalyses uridine(34) in tRNA + AH2 + O2 = 5-hydroxyuridine(34) in tRNA + A + H2O. Functionally, catalyzes oxygen-dependent 5-hydroxyuridine (ho5U) modification at position 34 in tRNAs. The protein is tRNA uridine(34) hydroxylase of Burkholderia pseudomallei (strain K96243).